Here is a 515-residue protein sequence, read N- to C-terminus: MSGYKPVAIPTYPKLGEKITQDTLYWKRYKTPVQIKEFGAVTKIHFSPVQPCTYAVTSSTRIHLYGQYSQEPIKTFSRFKDTAYCGTFRGDGKLLAAGCEDSVVQLFDISGKAALRQFSGHSKAVHFVDFTADKYRIVSGSDDYTSRLWDIPNGVEITSYNEHTDYIRCGCTSALNNDLFATGSYDHTIKIFDGRTDKSVMSMDHGQPVESVLLFPSGGLLVSAGGRYVKVWDILKGGQLLVSLRNHHKTVTSLCLSSSGQRLLSASLDRHVKVYSTMNYKVVHSFDYAASILSLALAPDDQMIVVGMTNGVLNIKHRKPEERKQLQSTTKRHPRYRVFVRGKDYMPKQDDIFISKPVIAHLKKYDKLLKGFHMTEALDTVLQPQIRNQRPEVTVAVMNELKRRGTLKNALAGRNEKQLSDLLIFLLKHLVNPQFVPILLNVAEHIIDIYSPVVGQSSVIYKQFIRLQEVLEKEINYQEELLKMLGMMDTLFATMTTKKESPWEEPKPILPLSSQ.

WD repeat units lie at residues 36 to 75 (KEFG…PIKT), 78 to 117 (RFKD…ALRQ), 120 to 159 (GHSK…EITS), 162 to 202 (EHTD…SVMS), 204 to 242 (DHGQ…QLLV), 246 to 285 (NHHK…VVHS), and 287 to 326 (DYAA…RKQL).

In terms of assembly, part of the small subunit (SSU) processome, composed of more than 70 proteins and the RNA chaperone small nucleolar RNA (snoRNA) U3. May be a component of the proposed t-UTP subcomplex of the ribosomal small subunit (SSU) processome.

The protein localises to the nucleus. It localises to the nucleolus. Its function is as follows. Ribosome biogenesis factor. Involved in nucleolar processing of pre-18S ribosomal RNA. Required for optimal pre-ribosomal RNA transcription by RNA polymerase I. Part of the small subunit (SSU) processome, first precursor of the small eukaryotic ribosomal subunit. During the assembly of the SSU processome in the nucleolus, many ribosome biogenesis factors, an RNA chaperone and ribosomal proteins associate with the nascent pre-rRNA and work in concert to generate RNA folding, modifications, rearrangements and cleavage as well as targeted degradation of pre-ribosomal RNA by the RNA exosome. In Xenopus tropicalis (Western clawed frog), this protein is U3 small nucleolar RNA-associated protein 15 homolog (utp15).